Reading from the N-terminus, the 248-residue chain is Mannose-binding protein C (248 aa).

The first 20 residues, 1–20, serve as a signal peptide directing secretion; it reads MSPFLSLPLLLLSVLSASYS. Residues 36 to 112 form a disordered region; it reads IACSSPGING…GDSSLAASER (77 aa). The Collagen-like domain occupies 42 to 99; sequence GINGFPGKDGRDGTKGEKGEPGQGLRGLQGPPGKLGPPGNPGPSGSPGAKGQKGDPGA. Proline 47 carries the post-translational modification 4-hydroxyproline. Residues 49 to 61 are compositionally biased toward basic and acidic residues; sequence KDGRDGTKGEKGE. Residues proline 73, proline 79, proline 82, and proline 88 each carry the 4-hydroxyproline modification. Positions 112 to 130 form a coiled coil; the sequence is RKALQTEMARIKKWVTFSL. A C-type lectin domain is found at 134-245; the sequence is VGKKLFLSNG…CSSSHLAICE (112 aa). Disulfide bonds link cysteine 155–cysteine 244 and cysteine 222–cysteine 236.

As to quaternary structure, oligomeric complex of 3 or more homotrimers. Interacts with MASP1 and MASP2. Interacts with MEP1A and MEP1B and may inhibit their catalytic activity. Post-translationally, hydroxylation on proline residues within the sequence motif, GXPG, is most likely to be 4-hydroxy as this fits the requirement for 4-hydroxylation in vertebrates.

The protein resides in the secreted. In terms of biological role, calcium-dependent lectin involved in innate immune defense. Binds mannose, fucose and N-acetylglucosamine on different microorganisms and activates the lectin complement pathway. Binds to late apoptotic cells, as well as to apoptotic blebs and to necrotic cells, but not to early apoptotic cells, facilitating their uptake by macrophages. In Saguinus oedipus (Cotton-top tamarin), this protein is Mannose-binding protein C (MBL2).